The sequence spans 140 residues: Large ribosomal subunit protein bL17 (140 aa).

Belongs to the bacterial ribosomal protein bL17 family. Part of the 50S ribosomal subunit. Contacts protein L32.

This chain is Large ribosomal subunit protein bL17, found in Ruegeria pomeroyi (strain ATCC 700808 / DSM 15171 / DSS-3) (Silicibacter pomeroyi).